The chain runs to 288 residues: Syntaxin-1A (288 aa).

At M1–K265 the chain is on the cytoplasmic side. Phosphoserine occurs at positions 14, 64, and 95. Positions D68–S109 form a coiled coil. Position 188 is a phosphoserine; by DAPK1 (S188). The t-SNARE coiled-coil homology domain occupies L192–A254. Residues K252, K253, and K256 each participate in a glycyl lysine isopeptide (Lys-Gly) (interchain with G-Cter in SUMO) cross-link. The chain crosses the membrane as a helical; Anchor for type IV membrane protein span at residues I266–I286. Topologically, residues F287–A288 are extracellular.

Belongs to the syntaxin family. As to quaternary structure, part of the SNARE core complex containing SNAP25, VAMP2 and STX1A; this complex constitutes the basic catalytic machinery of the complex neurotransmitter release apparatus. The SNARE complex interacts with CPLX1. Interacts with STXBP1. The interaction with STXBP1 promotes assembly of the SNARE complex. Interacts (via C-terminus) with KCNB1 (via C-terminus); the interaction increases in a calcium-dependent manner and induces a pore-independent enhancement of exocytosis in neuroendocrine cells, chromaffin cells, pancreatic beta cells and from the soma of dorsal root ganglia (DRG) neurons. Interacts with SYTL4. Interacts with STXBP6. Interacts with PLCL1 (via C2 domain). Interacts with OTOF. Interacts with LGI3. Interacts (via the H3 domain) with SLC6A4 (via the N-terminus); this interaction regulates SLC4A6 channel conductance in thalamocortical neurons. Interacts with SYT6 and SYT8; the interaction is Ca(2+)-dependent. Interacts with VAMP8. Interacts with SNAP23. Interacts with VAPA and SYBU. Interacts with PRRT2. Interacts with SEPT8. Interacts with STXBP5L. Interacts with synaptotagmin-1/SYT1. Interacts with SEPTIN5; in the cerebellar cortex. Interacts with SEPTIN4; in the striatum. Post-translationally, phosphorylated by CK2. Phosphorylation at Ser-188 by DAPK1 significantly decreases its interaction with STXBP1. Sumoylated, sumoylation is required for regulation of synaptic vesicle endocytosis.

The protein resides in the cytoplasmic vesicle. It localises to the secretory vesicle. It is found in the synaptic vesicle membrane. The protein localises to the cell membrane. Its subcellular location is the synapse. The protein resides in the synaptosome. In terms of biological role, plays an essential role in hormone and neurotransmitter calcium-dependent exocytosis and endocytosis. Part of the SNARE (Soluble NSF Attachment Receptor) complex composed of SNAP25, STX1A and VAMP2 which mediates the fusion of synaptic vesicles with the presynaptic plasma membrane. STX1A and SNAP25 are localized on the plasma membrane while VAMP2 resides in synaptic vesicles. The pairing of the three SNAREs from the N-terminal SNARE motifs to the C-terminal anchors leads to the formation of the SNARE complex, which brings membranes into close proximity and results in final fusion. Participates in the calcium-dependent regulation of acrosomal exocytosis in sperm. Also plays an important role in the exocytosis of hormones such as insulin or glucagon-like peptide 1 (GLP-1). This Pongo abelii (Sumatran orangutan) protein is Syntaxin-1A (STX1A).